Consider the following 111-residue polypeptide: Wound-induced proteinase inhibitor 1 (111 aa).

Positions 1-23 are cleaved as a signal peptide; sequence MEAKFAHIILFFLLAFSFETLMA. A propeptide spanning residues 24–36 is cleaved from the precursor; that stretch reads RKESDGPEVIKLL.

The protein belongs to the protease inhibitor I13 (potato type I serine protease inhibitor) family.

The protein resides in the secreted. The chain is Wound-induced proteinase inhibitor 1 from Solanum peruvianum (Peruvian tomato).